The chain runs to 203 residues: MTLRISGKSVSVGEALRGRVSDRTEEVLRKYFDGNYSGHITLSKDGFGFRTDCALHLDSGITLEADSNAPDAYASADQALVMIEKRLKRYKSRLKDRSARKAHVASAALAAMDATSYVLEAPGEGEDEDEVTGYSPVIIAEATTSLKQLSVSEAVMELDLSGAPCLVFQHGSSGRVNIIYRRADGNVGWVDPPGGKADGKAGG.

This sequence belongs to the HPF/YfiA ribosome-associated protein family. Long HPF subfamily. Interacts with 100S ribosomes.

Its subcellular location is the cytoplasm. Functionally, required for dimerization of active 70S ribosomes into 100S ribosomes in stationary phase; 100S ribosomes are translationally inactive and sometimes present during exponential growth. This chain is Ribosome hibernation promotion factor, found in Bradyrhizobium diazoefficiens (strain JCM 10833 / BCRC 13528 / IAM 13628 / NBRC 14792 / USDA 110).